The chain runs to 377 residues: Floricaula/leafy homolog (377 aa).

Positions 116–126 are enriched in basic and acidic residues; the sequence is RRRLDEEDPRR. Residues 116–190 are disordered; the sequence is RRRLDEEDPR…RKKGQRKVVD (75 aa). Over residues 131–141 the composition is skewed to polar residues; that stretch reads SGDNNTNTLDA. DNA-binding regions lie at residues 206–210, 275–282, and 346–349; these read REHPF, NKPKMRHY, and YVPT.

Belongs to the FLO/LFY family. In terms of tissue distribution, in developing inflorescences, leaf primordia and very young leaves.

The protein localises to the nucleus. Its function is as follows. Probable transcription factor. In Populus trichocarpa (Western balsam poplar), this protein is Floricaula/leafy homolog (FL).